A 383-amino-acid chain; its full sequence is G-protein coupled receptor E1 (383 aa).

The next 9 membrane-spanning stretches (helical) occupy residues 13–35, 78–98, 109–129, 160–180, 190–210, 242–262, 279–299, 323–343, and 351–371; these read SSLA…TTIA, LYLL…IIVI, MLLL…PFWM, VFCI…AVTA, IVTC…EFFF, VIML…YVII, LIFV…IVLL, LITK…YAFV, and LYHF…PFLS. A disulfide bridge links Cys145 with Cys222.

It belongs to the G-protein coupled receptor 1 family.

The protein localises to the host membrane. The sequence is that of G-protein coupled receptor E1 (E1) from Equine herpesvirus 2 (strain 86/87) (EHV-2).